Here is a 25-residue protein sequence, read N- to C-terminus: Ribosome-inactivating protein charantin (25 aa).

As to quaternary structure, monomer.

It carries out the reaction Endohydrolysis of the N-glycosidic bond at one specific adenosine on the 28S rRNA.. Inhibits cell-free translation in a rabbit reticulocyte lysate system. The chain is Ribosome-inactivating protein charantin from Momordica charantia (Bitter gourd).